The sequence spans 254 residues: Coiled-coil domain-containing protein 152 (254 aa).

Residues 61 to 246 adopt a coiled-coil conformation; the sequence is SIKEECATLH…LEQRLSVGKD (186 aa).

In terms of tissue distribution, detected in stomach.

In Homo sapiens (Human), this protein is Coiled-coil domain-containing protein 152 (CCDC152).